The sequence spans 782 residues: Isoamylase 3, chloroplastic (782 aa).

The N-terminal 68 residues, 1 to 68 (MDSIGINRAP…EKVRRFDSVR (68 aa)), are a transit peptide targeting the chloroplast. A compositionally biased stretch (polar residues) spans 68 to 81 (RSTTARAQNGNAGR). A disordered region spans residues 68-88 (RSTTARAQNGNAGRSMTEERG). Aspartate 445 (nucleophile) is an active-site residue. Glutamate 482 serves as the catalytic Proton donor.

It belongs to the glycosyl hydrolase 13 family. As to expression, expressed in leaves. Expressed at low levels in developing endosperm.

It localises to the plastid. It is found in the chloroplast. The protein localises to the amyloplast. The enzyme catalyses Hydrolysis of (1-&gt;6)-alpha-D-glucosidic branch linkages in glycogen, amylopectin and their beta-limit dextrins.. Starch-debranching enzyme that plays a role in the degradation of transitory starch during the night in leaf blades, facilitates the formation of spherical amyloplasts containing compound granules in the endosperm, and affects morphological characteristics of plastids. This Oryza sativa subsp. japonica (Rice) protein is Isoamylase 3, chloroplastic.